A 425-amino-acid polypeptide reads, in one-letter code: E3 ubiquitin-protein ligase GW2 (425 aa).

The RING-type; degenerate zinc finger occupies 62–105 (CPICFLYYPSLNRSKCCSKGICTECFLQMKPTHTAQPTQCPFCK).

As to expression, expressed in roots, shoots, leaves, inflorescence meristems, stamens, pistils, spikelet hulls and endosperms 4 days after fertilization.

The protein resides in the cytoplasm. It carries out the reaction S-ubiquitinyl-[E2 ubiquitin-conjugating enzyme]-L-cysteine + [acceptor protein]-L-lysine = [E2 ubiquitin-conjugating enzyme]-L-cysteine + N(6)-ubiquitinyl-[acceptor protein]-L-lysine.. It functions in the pathway protein modification; protein ubiquitination. In terms of biological role, E3 ubiquitin-protein ligase involved in the regulation of grain size. May limit grain width and weight by restricting cell proliferation of the spikelet hull. Possesses E3 ubiquitin-protein ligase activity in vitro. The sequence is that of E3 ubiquitin-protein ligase GW2 from Oryza sativa subsp. indica (Rice).